Here is a 227-residue protein sequence, read N- to C-terminus: Lipoprotein-releasing system ATP-binding protein LolD (227 aa).

An ABC transporter domain is found at 7–227 (LRLERIGRAY…TLKDGRVVDL (221 aa)). Residue 43–50 (APSGAGKS) coordinates ATP.

This sequence belongs to the ABC transporter superfamily. Lipoprotein translocase (TC 3.A.1.125) family. The complex is composed of two ATP-binding proteins (LolD) and two transmembrane proteins (LolC and LolE).

It is found in the cell inner membrane. Functionally, part of the ABC transporter complex LolCDE involved in the translocation of mature outer membrane-directed lipoproteins, from the inner membrane to the periplasmic chaperone, LolA. Responsible for the formation of the LolA-lipoprotein complex in an ATP-dependent manner. This chain is Lipoprotein-releasing system ATP-binding protein LolD, found in Brucella abortus biovar 1 (strain 9-941).